The chain runs to 388 residues: Arrestin-C (388 aa).

Belongs to the arrestin family. In terms of assembly, homodimer; disulfide-linked in response to retinal illumination. Interacts with CXCR4; the interaction is dependent on the C-terminal phosphorylation of CXCR4 and modulates the calcium ion mobilization activity of CXCR4. Interacts with GPR84. As to expression, inner and outer segments, and the inner plexiform regions of the retina.

The protein localises to the photoreceptor inner segment. The protein resides in the cell projection. Its subcellular location is the cilium. It is found in the photoreceptor outer segment. Its function is as follows. May play a role in an as yet undefined retina-specific signal transduction. Could bind to photoactivated-phosphorylated red/green opsins. The chain is Arrestin-C (ARR3) from Homo sapiens (Human).